The primary structure comprises 193 residues: NADH-quinone oxidoreductase subunit B (193 aa).

[4Fe-4S] cluster-binding residues include Cys-72, Cys-73, Cys-137, and Cys-167.

It belongs to the complex I 20 kDa subunit family. In terms of assembly, NDH-1 is composed of 14 different subunits. Subunits NuoB, C, D, E, F, and G constitute the peripheral sector of the complex. Requires [4Fe-4S] cluster as cofactor.

The protein localises to the cell inner membrane. It catalyses the reaction a quinone + NADH + 5 H(+)(in) = a quinol + NAD(+) + 4 H(+)(out). In terms of biological role, NDH-1 shuttles electrons from NADH, via FMN and iron-sulfur (Fe-S) centers, to quinones in the respiratory chain. Couples the redox reaction to proton translocation (for every two electrons transferred, four hydrogen ions are translocated across the cytoplasmic membrane), and thus conserves the redox energy in a proton gradient. In Brucella anthropi (strain ATCC 49188 / DSM 6882 / CCUG 24695 / JCM 21032 / LMG 3331 / NBRC 15819 / NCTC 12168 / Alc 37) (Ochrobactrum anthropi), this protein is NADH-quinone oxidoreductase subunit B.